A 517-amino-acid chain; its full sequence is Zinc finger protein 215 (517 aa).

In terms of domain architecture, SCAN box spans arginine 48–valine 126. Residues valine 164 to phenylalanine 237 enclose the KRAB domain. C2H2-type zinc fingers lie at residues tyrosine 379–histidine 401, tyrosine 407–histidine 429, tyrosine 462–histidine 484, and phenylalanine 490–histidine 512.

It belongs to the krueppel C2H2-type zinc-finger protein family.

The protein localises to the nucleus. In terms of biological role, may be involved in transcriptional regulation. The chain is Zinc finger protein 215 (ZNF215) from Homo sapiens (Human).